The chain runs to 254 residues: MEKLLMTNTLWNSVDELPIHDSWKPVLKPVEDAIRKLGVFLAEEEFLPPVDDVFRAFSYPFDAVKVLIMGQDPYPTPGHAMGLSFSTQPDVRPLPRSLNNIFKELVSDVGSLGDSASEQGALDLGINAPGSVAGTQVALPADGDLRAWSNQGVALFNRVLTVHPGQAGSHKGKGWEAVTEQAIKALAERDQPLVAILWGKQAQEVQKFLGDTPCICSVHPSPLSASRGFFGSKPFSRANEILSSLGATEIDWSL.

The active-site Proton acceptor is the D72. The insert stretch occupies residues 111–136 (SLGDSASEQGALDLGINAPGSVAGTQ).

It belongs to the uracil-DNA glycosylase (UDG) superfamily. UNG family.

It is found in the cytoplasm. The catalysed reaction is Hydrolyzes single-stranded DNA or mismatched double-stranded DNA and polynucleotides, releasing free uracil.. Its function is as follows. Excises uracil residues from the DNA which can arise as a result of misincorporation of dUMP residues by DNA polymerase or due to deamination of cytosine. The polypeptide is Uracil-DNA glycosylase (ung) (Corynebacterium glutamicum (strain ATCC 13032 / DSM 20300 / JCM 1318 / BCRC 11384 / CCUG 27702 / LMG 3730 / NBRC 12168 / NCIMB 10025 / NRRL B-2784 / 534)).